A 257-amino-acid chain; its full sequence is Alcohol dehydrogenase 1 (257 aa).

9 to 33 lines the NAD(+) pocket; it reads VFVGGLGFIGYEACKTLITRDLASL. Ser137 is a binding site for substrate. Residue Tyr150 is the Proton acceptor of the active site.

It belongs to the short-chain dehydrogenases/reductases (SDR) family. As to quaternary structure, homodimer.

It carries out the reaction a primary alcohol + NAD(+) = an aldehyde + NADH + H(+). It catalyses the reaction a secondary alcohol + NAD(+) = a ketone + NADH + H(+). This is Alcohol dehydrogenase 1 (ADH1) from Ceratitis cosyra (Mango fruit fly).